The sequence spans 210 residues: Calcineurin B-like protein 4 (210 aa).

G2 is lipidated: N-myristoyl glycine. 4 EF-hand domains span residues 31–66 (EVEA…RNSR), 67–102 (KANL…FHPK), 104–139 (PKSE…LLDE), and 148–183 (AVEA…NPAS). Positions 161, 163, 165, 167, and 172 each coordinate Ca(2+).

This sequence belongs to the calcineurin regulatory subunit family. Homodimer. Interacts with CIPK24. Expressed in leaves.

The protein resides in the cell membrane. Its function is as follows. Acts as a calcium sensor involved in the regulatory pathway for the control of intracellular Na(+) and K(+) homeostasis and salt tolerance. Operates in synergy with CIPK24 to activate the plasma membrane Na(+)/H(+) antiporter SOS1. May function as positive regulator of salt stress responses. CBL proteins interact with CIPK serine-threonine protein kinases. Binding of a CBL protein to the regulatory NAF domain of a CIPK protein lead to the activation of the kinase in a calcium-dependent manner. This is Calcineurin B-like protein 4 (CBL4) from Oryza sativa subsp. japonica (Rice).